Here is a 243-residue protein sequence, read N- to C-terminus: I/6 autoantigen (243 aa).

Residues 110–145 (LSVEEVDALFNALDSDNRGYVSVDEFMDALYGEEGR) enclose the EF-hand domain. Positions 166–243 (PSWRMRPTPK…PPKQKAGCGC (78 aa)) are disordered. Over residues 176-196 (PTRKLRQKRKREQGQKRKQGQ) the composition is skewed to basic residues. 6 repeat units span residues 181-188 (RQKRKREQ), 189-196 (GQKRKQGQ), 197-204 (RQKQEQGQ), 205-212 (RQKREQGQ), 213-220 (RQKQEQGQ), and 221-228 (KRKRERGG). The 6 X 8 AA tandem repeats stretch occupies residues 181-228 (RQKRKREQGQKRKQGQRQKQEQGQRQKREQGQRQKQEQGQKRKRERGG). Residues 198 to 220 (QKQEQGQRQKREQGQRQKQEQGQ) are compositionally biased toward basic and acidic residues.

It localises to the cytoplasm. Its subcellular location is the cytoskeleton. Functionally, microtubule-associated protein that may be involved in cross-linking microtubules. In Trypanosoma brucei brucei, this protein is I/6 autoantigen.